Reading from the N-terminus, the 437-residue chain is La-related protein 7 homolog (437 aa).

The region spanning 38-145 (SKSPSLTIPK…KRKKKFDNRT (108 aa)) is the HTH La-type RNA-binding domain. The region spanning 279 to 397 (ELSQSCFLKI…QRSSIDEIKA (119 aa)) is the xRRM domain. Basic residues predominate over residues 417–427 (RRPVSKRKNKA). Residues 417–437 (RRPVSKRKNKAINKMSTEVKK) are disordered.

Belongs to the LARP7 family. In terms of assembly, component of the telomerase holoenzyme complex composed minimally of the catalytic subunit p123 and the telomerase RNA template component. The mature form of the protein is a protein of 43 kDa, which is derived from a 51 kDa precursor by proteolytic cleavage.

The protein resides in the nucleus. The protein localises to the chromosome. Its subcellular location is the telomere. In terms of biological role, RNA-binding protein required for assembly of the holoenzyme telomerase ribonucleoprotein (RNP) complex. Specifically binds telomerase RNA and promotes its assembly with catalytic subunit p123, thereby stimulating enzymatic activity and processivity of p123. Telomerase is a ribonucleoprotein enzyme essential that copies new telomeric repeats onto chromosome ends and functions to maintain cell division. The chain is La-related protein 7 homolog from Euplotes aediculatus (Ciliate).